A 565-amino-acid chain; its full sequence is Augmin complex subunit dgt3 (565 aa).

2 coiled-coil regions span residues 135-171 (ELQL…AKKA) and 212-241 (QDYD…IQFY).

It belongs to the HAUS3 family. Component of the augmin complex composed of dgt2, dgt3, dgt4, dgt5, dgt6, msd1, msd5 and wac. The complex interacts directly or indirectly with microtubules and is required for centrosome-independent generation of spindle microtubules.

Its subcellular location is the cytoplasm. The protein resides in the cytoskeleton. It localises to the spindle. As part of the augmin complex, plays a role in centrosome-independent generation of spindle microtubules. The complex is required for mitotic spindle assembly through its involvement in localizing gamma-tubulin to spindle microtubules. In Drosophila melanogaster (Fruit fly), this protein is Augmin complex subunit dgt3.